A 155-amino-acid polypeptide reads, in one-letter code: Ribosomal RNA large subunit methyltransferase H (155 aa).

Residues Leu72, Gly103, and 122–127 (LSKLTM) contribute to the S-adenosyl-L-methionine site.

Belongs to the RNA methyltransferase RlmH family. Homodimer.

It localises to the cytoplasm. It catalyses the reaction pseudouridine(1915) in 23S rRNA + S-adenosyl-L-methionine = N(3)-methylpseudouridine(1915) in 23S rRNA + S-adenosyl-L-homocysteine + H(+). Functionally, specifically methylates the pseudouridine at position 1915 (m3Psi1915) in 23S rRNA. The chain is Ribosomal RNA large subunit methyltransferase H from Methylobacillus flagellatus (strain ATCC 51484 / DSM 6875 / VKM B-1610 / KT).